The chain runs to 129 residues: Small ribosomal subunit protein bS16m (129 aa).

This sequence belongs to the bacterial ribosomal protein bS16 family. In terms of assembly, component of the mitochondrial ribosome small subunit (28S) which comprises a 12S rRNA and about 30 distinct proteins.

The protein localises to the mitochondrion. This chain is Small ribosomal subunit protein bS16m (mRpS16), found in Drosophila melanogaster (Fruit fly).